A 714-amino-acid chain; its full sequence is Lipase maturation factor 2 (714 aa).

The next 9 membrane-spanning stretches (helical) occupy residues 11–31 (LFLA…YLQI), 79–99 (MELL…CAPL), 103–125 (LLFA…FLYF), 159–179 (SVTF…SGVV), 221–241 (FSVV…FMPI), 257–277 (ILII…VLAF), 304–324 (TLLS…LLYW), 358–378 (VTLP…LSAL), and 398–418 (AVFA…FTYI). An N-linked (GlcNAc...) asparagine glycan is attached at asparagine 483. A helical membrane pass occupies residues 629–649 (PFSPHVVLWSLYVVAATTCLL). Residues 654–669 (RRPRGGAPPTRHKAPK) are compositionally biased toward basic residues. Residues 654 to 714 (RRPRGGAPPT…EGPRGTKRRK (61 aa)) form a disordered region. Residues 683–708 (RRKEGREAEERGEGRSRGAADGEGPR) are compositionally biased toward basic and acidic residues.

It belongs to the lipase maturation factor family.

It localises to the endoplasmic reticulum membrane. Its function is as follows. Involved in the maturation of specific proteins in the endoplasmic reticulum. May be required for maturation and transport of active lipoprotein lipase (LPL) through the secretory pathway. The sequence is that of Lipase maturation factor 2 (LMF2) from Gallus gallus (Chicken).